The primary structure comprises 297 residues: N-acetylneuraminate lyase (297 aa).

Aceneuramate is bound by residues Ser47 and Thr48. Tyr137 (proton donor) is an active-site residue. The active-site Schiff-base intermediate with substrate is Lys165. Residues Thr167, Gly189, Asp191, Glu192, and Ser208 each coordinate aceneuramate.

The protein belongs to the DapA family. NanA subfamily. As to quaternary structure, homotetramer.

The protein localises to the cytoplasm. It carries out the reaction aceneuramate = aldehydo-N-acetyl-D-mannosamine + pyruvate. The protein operates within amino-sugar metabolism; N-acetylneuraminate degradation; D-fructose 6-phosphate from N-acetylneuraminate: step 1/5. Its function is as follows. Catalyzes the reversible aldol cleavage of N-acetylneuraminic acid (sialic acid; Neu5Ac) to form pyruvate and N-acetylmannosamine (ManNAc) via a Schiff base intermediate. The polypeptide is N-acetylneuraminate lyase (Escherichia coli O139:H28 (strain E24377A / ETEC)).